Here is a 209-residue protein sequence, read N- to C-terminus: Probable peptide export ATP-binding protein YydI (209 aa).

The ABC transporter domain occupies Met1–Ile207. Gly33 to Ser40 serves as a coordination point for ATP.

This sequence belongs to the ABC transporter superfamily. The complex is composed of two ATP-binding proteins (YydI), two transmembrane proteins (YydJ).

Its function is as follows. Suggested to be part of an ABC transporter complex YydIJ involved in export of the modified peptide YydF. Responsible for energy coupling to the transport system. The sequence is that of Probable peptide export ATP-binding protein YydI (yydI) from Bacillus subtilis (strain 168).